The chain runs to 153 residues: Nucleoside diphosphate kinase (153 aa).

Residues K9, F57, R85, T91, R102, and N112 each coordinate ATP. H115 acts as the Pros-phosphohistidine intermediate in catalysis.

Belongs to the NDK family. Homotetramer. It depends on Mg(2+) as a cofactor.

It is found in the cytoplasm. The catalysed reaction is a 2'-deoxyribonucleoside 5'-diphosphate + ATP = a 2'-deoxyribonucleoside 5'-triphosphate + ADP. The enzyme catalyses a ribonucleoside 5'-diphosphate + ATP = a ribonucleoside 5'-triphosphate + ADP. Its function is as follows. Major role in the synthesis of nucleoside triphosphates other than ATP. The ATP gamma phosphate is transferred to the NDP beta phosphate via a ping-pong mechanism, using a phosphorylated active-site intermediate. This chain is Nucleoside diphosphate kinase, found in Parabacteroides distasonis (strain ATCC 8503 / DSM 20701 / CIP 104284 / JCM 5825 / NCTC 11152).